Reading from the N-terminus, the 262-residue chain is Small ribosomal subunit protein uS2 (262 aa).

Residues 225-262 (KQGEQLTEEAKPEDKEDEKGQAEEKEVKEENNSANKEE) are disordered. Basic and acidic residues predominate over residues 232 to 262 (EEAKPEDKEDEKGQAEEKEVKEENNSANKEE).

This sequence belongs to the universal ribosomal protein uS2 family.

The sequence is that of Small ribosomal subunit protein uS2 from Halothermothrix orenii (strain H 168 / OCM 544 / DSM 9562).